Reading from the N-terminus, the 371-residue chain is Aspartate-semialdehyde dehydrogenase (371 aa).

NADP(+)-binding positions include 11–14, 38–39, and glutamine 75; these read RGMV and TS. Arginine 104 is a binding site for phosphate. Cysteine 137 functions as the Acyl-thioester intermediate in the catalytic mechanism. Glutamine 164 contacts substrate. An NADP(+)-binding site is contributed by 167–168; it reads SG. Glutamate 243 contributes to the substrate binding site. Position 246 (lysine 246) interacts with phosphate. Residue arginine 269 participates in substrate binding. Histidine 276 functions as the Proton acceptor in the catalytic mechanism. Glutamine 352 is a binding site for NADP(+).

Belongs to the aspartate-semialdehyde dehydrogenase family. In terms of assembly, homodimer.

The catalysed reaction is L-aspartate 4-semialdehyde + phosphate + NADP(+) = 4-phospho-L-aspartate + NADPH + H(+). It functions in the pathway amino-acid biosynthesis; L-lysine biosynthesis via DAP pathway; (S)-tetrahydrodipicolinate from L-aspartate: step 2/4. Its pathway is amino-acid biosynthesis; L-methionine biosynthesis via de novo pathway; L-homoserine from L-aspartate: step 2/3. It participates in amino-acid biosynthesis; L-threonine biosynthesis; L-threonine from L-aspartate: step 2/5. In terms of biological role, catalyzes the NADPH-dependent formation of L-aspartate-semialdehyde (L-ASA) by the reductive dephosphorylation of L-aspartyl-4-phosphate. This chain is Aspartate-semialdehyde dehydrogenase, found in Buchnera aphidicola subsp. Schizaphis graminum (strain Sg).